The sequence spans 803 residues: Isoamylase 1, chloroplastic (803 aa).

Residues 1–54 (MASLPHCLSARPLVVAAAPGRPGPGPGPWLRGGARRRNAAFSAGNAGRRVGLRR) constitute a chloroplast transit peptide. Catalysis depends on D432, which acts as the Nucleophile. Residue E488 is the Proton donor of the active site.

The protein belongs to the glycosyl hydrolase 13 family. Forms a homo-pentamer and a hetero-hexamer composed of five ISA1 and one ISA2. Interacts with FLO6/SIP4. In terms of tissue distribution, highly expressed in developing endosperm. Expressed at low levels in leaves.

It is found in the plastid. Its subcellular location is the chloroplast. It carries out the reaction Hydrolysis of (1-&gt;6)-alpha-D-glucosidic branch linkages in glycogen, amylopectin and their beta-limit dextrins.. It functions in the pathway glycan biosynthesis; starch biosynthesis. With respect to regulation, inhibited by copper chloride, mercury chloride, ammonium molybdate and para-chloromercuribenzoate. Functionally, starch-debranching enzyme involved in amylopectin biosynthesis in endosperm. Functions by removing excess branches or improper branches that interfere with the formation of double helices of the cluster chains of amylopectin and crystallization of starch. Works as ISA1 homooligomer or together with ISA2 as heterooligomer. The heterooligomer ISA1 and ISA2 possesses higher affinity than the ISA1 homooligomer for various branched polyglucans in vitro, but no marked differences exist in chain preferences for debranching of amylopectin and phytoglycogen between these forms. This Oryza sativa subsp. japonica (Rice) protein is Isoamylase 1, chloroplastic.